The chain runs to 307 residues: Oxygen-dependent coproporphyrinogen-III oxidase (307 aa).

S99 lines the substrate pocket. H103 and H113 together coordinate a divalent metal cation. The active-site Proton donor is the H113. 115–117 (NVR) is a substrate binding site. The a divalent metal cation site is built by H152 and H182. The interval 247 to 282 (YVEFNLVFDRGTLFGLQSGGRTESILLSMPPTAGWR) is important for dimerization. 265 to 267 (GGR) contributes to the substrate binding site.

The protein belongs to the aerobic coproporphyrinogen-III oxidase family. Homodimer. It depends on a divalent metal cation as a cofactor.

The protein localises to the cytoplasm. The enzyme catalyses coproporphyrinogen III + O2 + 2 H(+) = protoporphyrinogen IX + 2 CO2 + 2 H2O. It participates in porphyrin-containing compound metabolism; protoporphyrin-IX biosynthesis; protoporphyrinogen-IX from coproporphyrinogen-III (O2 route): step 1/1. Functionally, involved in the heme biosynthesis. Catalyzes the aerobic oxidative decarboxylation of propionate groups of rings A and B of coproporphyrinogen-III to yield the vinyl groups in protoporphyrinogen-IX. The sequence is that of Oxygen-dependent coproporphyrinogen-III oxidase from Burkholderia mallei (strain SAVP1).